Here is a 310-residue protein sequence, read N- to C-terminus: Aspartate carbamoyltransferase catalytic subunit (310 aa).

Positions 58 and 59 each coordinate carbamoyl phosphate. L-aspartate is bound at residue Lys-86. Residues Arg-108, His-136, and Gln-139 each contribute to the carbamoyl phosphate site. L-aspartate is bound by residues Arg-169 and Arg-224. Gly-265 and Pro-266 together coordinate carbamoyl phosphate.

The protein belongs to the aspartate/ornithine carbamoyltransferase superfamily. ATCase family. Heterododecamer (2C3:3R2) of six catalytic PyrB chains organized as two trimers (C3), and six regulatory PyrI chains organized as three dimers (R2).

The catalysed reaction is carbamoyl phosphate + L-aspartate = N-carbamoyl-L-aspartate + phosphate + H(+). It functions in the pathway pyrimidine metabolism; UMP biosynthesis via de novo pathway; (S)-dihydroorotate from bicarbonate: step 2/3. Functionally, catalyzes the condensation of carbamoyl phosphate and aspartate to form carbamoyl aspartate and inorganic phosphate, the committed step in the de novo pyrimidine nucleotide biosynthesis pathway. The sequence is that of Aspartate carbamoyltransferase catalytic subunit from Trichlorobacter lovleyi (strain ATCC BAA-1151 / DSM 17278 / SZ) (Geobacter lovleyi).